The primary structure comprises 316 residues: Transcription initiation factor IIB (316 aa).

The TFIIB-type zinc finger occupies 7–38 (FRLRCPVCGSTDIVFNEETGEYVCARCGTIVL). Residues C11, C14, C30, and C33 each contribute to the Zn(2+) site. The tract at residues 51 to 73 (FTPEERERRGRTGAPLSPTLHDH) is disordered. 2 consecutive repeat copies span residues 124 to 207 (NELD…TKEL) and 218 to 299 (DHIP…EIMK).

It belongs to the TFIIB family.

In terms of biological role, stabilizes TBP binding to an archaeal box-A promoter. Also responsible for recruiting RNA polymerase II to the pre-initiation complex (DNA-TBP-TFIIB). This chain is Transcription initiation factor IIB, found in Ignicoccus hospitalis (strain KIN4/I / DSM 18386 / JCM 14125).